Reading from the N-terminus, the 112-residue chain is uncharacterized protein (112 aa).

A helical transmembrane segment spans residues 75 to 95 (ILGVFGGFIYILTPLPIVSGF).

The protein localises to the membrane. This is an uncharacterized protein from Methanocaldococcus jannaschii (strain ATCC 43067 / DSM 2661 / JAL-1 / JCM 10045 / NBRC 100440) (Methanococcus jannaschii).